Reading from the N-terminus, the 451-residue chain is TERF1-interacting nuclear factor 2 (451 aa).

Residue Ala2 is modified to N-acetylalanine. A disordered region spans residues 229 to 257 (NPLPKAKPGTHLPQGPSSRTHPEPLAGRH). The TBM signature appears at 256-278 (RHFNLAPLGRRRVQSQWASTRGG). The short motif at 262–268 (PLGRRRV) is the Nuclear localization signal element. Ser295 carries the post-translational modification Phosphoserine. Glycyl lysine isopeptide (Lys-Gly) (interchain with G-Cter in SUMO2) cross-links involve residues Lys302, Lys306, Lys341, and Lys353.

In terms of assembly, monomer. Found in a complex with POT1; TERF1 and TNKS1. Component of the shelterin complex (telosome) composed of TERF1, TERF2, TINF2, TERF2IP ACD and POT1. Interacts with TERF1, TERF2 and ACD. Detected in heart, brain, placenta, lung, liver, skeletal muscle, kidney and pancreas.

It localises to the nucleus. Its subcellular location is the chromosome. It is found in the telomere. The protein resides in the nucleus matrix. Functionally, component of the shelterin complex (telosome) that is involved in the regulation of telomere length and protection. Shelterin associates with arrays of double-stranded TTAGGG repeats added by telomerase and protects chromosome ends; without its protective activity, telomeres are no longer hidden from the DNA damage surveillance and chromosome ends are inappropriately processed by DNA repair pathways. Plays a role in shelterin complex assembly. Isoform 1 may have additional role in tethering telomeres to the nuclear matrix. The chain is TERF1-interacting nuclear factor 2 (TINF2) from Homo sapiens (Human).